A 421-amino-acid polypeptide reads, in one-letter code: Gamma-glutamyl phosphate reductase (421 aa).

It belongs to the gamma-glutamyl phosphate reductase family.

The protein resides in the cytoplasm. The enzyme catalyses L-glutamate 5-semialdehyde + phosphate + NADP(+) = L-glutamyl 5-phosphate + NADPH + H(+). Its pathway is amino-acid biosynthesis; L-proline biosynthesis; L-glutamate 5-semialdehyde from L-glutamate: step 2/2. In terms of biological role, catalyzes the NADPH-dependent reduction of L-glutamate 5-phosphate into L-glutamate 5-semialdehyde and phosphate. The product spontaneously undergoes cyclization to form 1-pyrroline-5-carboxylate. The chain is Gamma-glutamyl phosphate reductase from Acinetobacter baumannii (strain AYE).